The following is a 214-amino-acid chain: Homeobox protein HEX homolog pha-2 (214 aa).

Disordered regions lie at residues methionine 1–glutamate 50 and arginine 180–glycine 214. The span at serine 24 to glutamate 34 shows a compositional bias: low complexity. The segment covering cysteine 35–threonine 44 has biased composition (polar residues). Residues arginine 124–arginine 183 constitute a DNA-binding region (homeobox). Residues serine 200 to glycine 214 are compositionally biased toward polar residues.

It is found in the nucleus. Functionally, transcriptional repressor. Involved in pharyngeal development and required for the formation of the pharyngeal isthmus. Plays a role in modulating cytoskeleton in the muscle cells of the isthmus. Regulates expression of the acetylcholinesterase genes ace-1 and ace-2. May regulate its own expression. The protein is Homeobox protein HEX homolog pha-2 of Caenorhabditis elegans.